A 412-amino-acid chain; its full sequence is Proteasome-activating nucleotidase (412 aa).

Positions 15 to 73 (EDIYQYLLERITNLENRNLELREQFRQMESEKRYVETQKIRYERELRKLKSEIEQLRSP) form a coiled coil. ATP contacts are provided by residues 197–202 (GTGKTL) and histidine 336. The segment at 410 to 412 (MFA) is docks into pockets in the proteasome alpha-ring to cause gate opening.

The protein belongs to the AAA ATPase family. Homohexamer. The hexameric complex has a two-ring architecture resembling a top hat that caps the 20S proteasome core at one or both ends. Upon ATP-binding, the C-terminus of PAN interacts with the alpha-rings of the proteasome core by binding to the intersubunit pockets.

Its subcellular location is the cytoplasm. Its function is as follows. ATPase which is responsible for recognizing, binding, unfolding and translocation of substrate proteins into the archaeal 20S proteasome core particle. Is essential for opening the gate of the 20S proteasome via an interaction with its C-terminus, thereby allowing substrate entry and access to the site of proteolysis. Thus, the C-termini of the proteasomal ATPase function like a 'key in a lock' to induce gate opening and therefore regulate proteolysis. Unfolding activity requires energy from ATP hydrolysis, whereas ATP binding alone promotes ATPase-20S proteasome association which triggers gate opening, and supports translocation of unfolded substrates. In Methanoculleus marisnigri (strain ATCC 35101 / DSM 1498 / JR1), this protein is Proteasome-activating nucleotidase.